A 512-amino-acid polypeptide reads, in one-letter code: Glutathione-binding protein GsiB (512 aa).

Residues 1 to 26 (MARAVHRSGLVALGIATALMASCAFA) form the signal peptide.

It belongs to the bacterial solute-binding protein 5 family. The complex is composed of two ATP-binding proteins (GsiA), two transmembrane proteins (GsiC and GsiD) and a solute-binding protein (GsiB).

The protein resides in the periplasm. Functionally, part of the ABC transporter complex GsiABCD involved in glutathione import. Binds glutathione. The polypeptide is Glutathione-binding protein GsiB (Shigella boydii serotype 4 (strain Sb227)).